A 592-amino-acid polypeptide reads, in one-letter code: Pectinesterase/pectinesterase inhibitor 3 (592 aa).

The signal sequence occupies residues 1–35 (MAPSMKEIFSKDNFKKNKKLVLLSAAVALLFVAAV). Positions 36 to 238 (AGISAGASKA…KITSNNRKLK (203 aa)) are cleaved as a propeptide — removed in mature 42 kDa form. A propeptide spans 36 to 273 (AGISAGASKA…WLSAGDRRLL (238 aa)) (removed in mature 38 kDa form). The segment at 53 to 212 (PSSHAVLRSS…EHMCSNALAM (160 aa)) is pectinesterase inhibitor 3. N96 and N215 each carry an N-linked (GlcNAc...) asparagine glycan. Positions 281–578 (DATVAADGSG…YTAGQFIGGG (298 aa)) are pectinesterase 3. Substrate contacts are provided by T356 and Q386. D409 acts as the Proton donor; for pectinesterase activity in catalysis. C423 and C443 are joined by a disulfide. The active-site Nucleophile; for pectinesterase activity is the D430. Substrate is bound by residues Q454, R498, and W500.

The protein in the N-terminal section; belongs to the PMEI family. It in the C-terminal section; belongs to the pectinesterase family. As to quaternary structure, interacts with BIIDXI and At5g11420. Binds reversibly to PMEI4, PMEI7 and PMEI8 to be inhibited; the stability of the PME3-PMEIs complexes and the inhibition of the pectin methylesterase (PME) activity is pH-dependent, based on protonation status of amino-acids at the complex interface. Expressed in roots, cotyledons, hypocotyls, seedlings, leaves, stems, flowers, dry seeds and siliques. Accumulates in etiolated hypocotyls (at protein level).

The protein resides in the secreted. The protein localises to the extracellular space. It is found in the apoplast. It localises to the cell wall. It catalyses the reaction [(1-&gt;4)-alpha-D-galacturonosyl methyl ester](n) + n H2O = [(1-&gt;4)-alpha-D-galacturonosyl](n) + n methanol + n H(+). The protein operates within glycan metabolism; pectin degradation; 2-dehydro-3-deoxy-D-gluconate from pectin: step 1/5. Regulated negatively by pectinesterase inhibitors (e.g. PMEI3, PMEI4, PMEI7 and PMEI9) in a pH-dependent manner, mainly in slightly acidic conditions (pH 6.0 and 5.0), especially in dark-grown hypocotyls; this processus relies on changes in the protonation of amino acids involved in intermolecular and intramolecular interactions. Functionally, acts in the modification of cell walls via demethylesterification of cell wall pectin. Required for zinc Zn(2+) homeostasis and to monitor Zn(2+) influence on cell wall-controlled growth processes such as root cell elongation. Monitors seed germination and favors root hairs production. Prevents cruciferin seed storage proteins activity, but promotes the expression of genes involved in cell wall organization and remodeling as well as genes involved in lipid and protein metabolism, during post-germinative growth of seedlings. Confers sensitivity to Zn(2+) when overexpressed. Acts as a susceptibility factor required for the initial colonization of the host tissue by virulent pathogens including Botrytis cinerea and Pectobacterium carotovorum, probably by facilitating cell wall pectine degradation by pathogen pectic enzymes after its demethylesterification. In Arabidopsis thaliana (Mouse-ear cress), this protein is Pectinesterase/pectinesterase inhibitor 3.